The chain runs to 384 residues: Deoxyguanosinetriphosphate triphosphohydrolase-like protein (384 aa).

Positions 62 to 198 (RLTHSLEVST…AALADDISYI (137 aa)) constitute an HD domain.

It belongs to the dGTPase family. Type 2 subfamily.

The sequence is that of Deoxyguanosinetriphosphate triphosphohydrolase-like protein from Rickettsia conorii (strain ATCC VR-613 / Malish 7).